A 173-amino-acid chain; its full sequence is MIDSDGFRANVGIIICNRFGQVMWARRFGQHSWQFPQGGVDDGESAEEAMYRELYEEVGLKPEHVQILTSTRSWLRYRLPKRLIRQDSKPVCIGQKQKWFLLQLKSAETAIDLNASGHPEFDDWRWVSYWYPVRQVVSFKRDVYRKVMKEFAVTTLPLQVKESNNRRRGMRRS.

The 144-residue stretch at 6-149 folds into the Nudix hydrolase domain; it reads GFRANVGIII…KRDVYRKVMK (144 aa). Residues 38-59 carry the Nudix box motif; sequence GGVDDGESAEEAMYRELYEEVG.

The protein belongs to the Nudix hydrolase family. RppH subfamily. It depends on a divalent metal cation as a cofactor.

Its function is as follows. Accelerates the degradation of transcripts by removing pyrophosphate from the 5'-end of triphosphorylated RNA, leading to a more labile monophosphorylated state that can stimulate subsequent ribonuclease cleavage. The chain is RNA pyrophosphohydrolase from Shewanella pealeana (strain ATCC 700345 / ANG-SQ1).